The primary structure comprises 236 residues: Ribosome assembly factor mrt4 (236 aa).

Belongs to the universal ribosomal protein uL10 family. As to quaternary structure, associates with the pre-60S ribosomal particle.

It localises to the nucleus. It is found in the nucleolus. The protein resides in the cytoplasm. Its function is as follows. Component of the ribosome assembly machinery. Nuclear paralog of the ribosomal protein P0, it binds pre-60S subunits at an early stage of assembly in the nucleolus, and is replaced by P0 in cytoplasmic pre-60S subunits and mature 80S ribosomes. The polypeptide is Ribosome assembly factor mrt4 (Eremothecium gossypii (strain ATCC 10895 / CBS 109.51 / FGSC 9923 / NRRL Y-1056) (Yeast)).